Here is a 1037-residue protein sequence, read N- to C-terminus: Probable aminoglycoside efflux pump (1037 aa).

Residues 1–9 (MANFFIDRP) are Cytoplasmic-facing. Residues 10–28 (IFAWVLAILLCLTGTLAIF) form a helical membrane-spanning segment. The Periplasmic segment spans residues 29–339 (SLPVEQYPDL…TSFVKASIED (311 aa)). A helical membrane pass occupies residues 340-359 (VVKTLLEAIALVFLVMYLFL). At 360–365 (QNFRAT) the chain is on the cytoplasmic side. Residues 366–385 (LIPTIAVPVVLMGTFSVLYA) form a helical membrane-spanning segment. Over 386–391 (FGYSVN) the chain is Periplasmic. Residues 392–413 (TLTMFAMVLAIGLLVDDAIVVV) form a helical membrane-spanning segment. At 414–441 (ENVERIMSEEGLTPREATRKSMGQIQGA) the chain is on the cytoplasmic side. The helical transmembrane segment at 442–460 (LVGIAMVLSAVFVPMAFFG) threads the bilayer. Topologically, residues 461 to 473 (GTTGAIYRQFSIT) are periplasmic. Residues 474–496 (IVAAMVLSVLVAMILTPALCATL) traverse the membrane as a helical segment. Residues 497 to 537 (LKPLKKGEHHGQKGFFAWFNQMFNRNAERYEKGVAKILHRS) are Cytoplasmic-facing. Residues 538 to 556 (LRWIVIYVLLLGGMVFLFL) form a helical membrane-spanning segment. Over 557–870 (RLPTSFLPLE…SYQERLSGAQ (314 aa)) the chain is Periplasmic. The helical transmembrane segment at 871-890 (APALYAISLLVVFLCLAALY) threads the bilayer. The Cytoplasmic portion of the chain corresponds to 891-896 (ESWSVP). A helical membrane pass occupies residues 897-916 (FSVMLVVPLGVIGALLATWM). The Periplasmic segment spans residues 917–922 (RGLEND). A helical transmembrane segment spans residues 923–944 (VYFQVGLLTVIGLSAKNAILIV). The Cytoplasmic segment spans residues 945–971 (EFANEMNQKGHDLFEATLHACRQRLRP). Residues 972-990 (ILMTSLAFIFGVLPMATST) traverse the membrane as a helical segment. Residues 991 to 1003 (GAGSGGQHAVGTG) lie on the Periplasmic side of the membrane. Residues 1004–1026 (VMGGMISATILAIYFVPLFFVLV) traverse the membrane as a helical segment. Topologically, residues 1027-1037 (RRRFPLKPRPE) are cytoplasmic.

The protein belongs to the resistance-nodulation-cell division (RND) (TC 2.A.6) family.

The protein resides in the cell inner membrane. Functionally, participates in the efflux of aminoglycosides. Confers resistance to a variety of these substances. In Escherichia coli (strain K12), this protein is Probable aminoglycoside efflux pump (acrD).